The following is a 185-amino-acid chain: Thiol:disulfide interchange protein DsbE (185 aa).

The Cytoplasmic portion of the chain corresponds to 1-4; it reads MKRN. The chain crosses the membrane as a helical span at residues 5 to 25; sequence VLLLPLLIFLLIAAALLWQLA. Over 26 to 185 the chain is Periplasmic; it reads RNAQGDDPTN…WDRYSREAAQ (160 aa). The Thioredoxin domain maps to 39–177; that stretch reads ALTGKPVPAF…WESELKPLWD (139 aa). An intrachain disulfide couples C80 to C83.

It belongs to the thioredoxin family. DsbE subfamily.

It localises to the cell inner membrane. Involved in disulfide bond formation. Catalyzes a late, reductive step in the assembly of periplasmic c-type cytochromes, probably the reduction of disulfide bonds of the apocytochrome c to allow covalent linkage with the heme. Possible subunit of a heme lyase. The sequence is that of Thiol:disulfide interchange protein DsbE (dsbE1) from Salmonella typhi.